A 188-amino-acid chain; its full sequence is Elongation factor P (188 aa).

The protein belongs to the elongation factor P family.

Its subcellular location is the cytoplasm. The protein operates within protein biosynthesis; polypeptide chain elongation. Its function is as follows. Involved in peptide bond synthesis. Stimulates efficient translation and peptide-bond synthesis on native or reconstituted 70S ribosomes in vitro. Probably functions indirectly by altering the affinity of the ribosome for aminoacyl-tRNA, thus increasing their reactivity as acceptors for peptidyl transferase. This Saccharopolyspora erythraea (strain ATCC 11635 / DSM 40517 / JCM 4748 / NBRC 13426 / NCIMB 8594 / NRRL 2338) protein is Elongation factor P.